The following is a 325-amino-acid chain: Ferrochelatase (325 aa).

Residues His-195 and Glu-276 each contribute to the Fe cation site.

It belongs to the ferrochelatase family.

The protein localises to the cytoplasm. The enzyme catalyses heme b + 2 H(+) = protoporphyrin IX + Fe(2+). It participates in porphyrin-containing compound metabolism; protoheme biosynthesis; protoheme from protoporphyrin-IX: step 1/1. Its function is as follows. Catalyzes the ferrous insertion into protoporphyrin IX. This is Ferrochelatase from Methylococcus capsulatus (strain ATCC 33009 / NCIMB 11132 / Bath).